The sequence spans 300 residues: Zinc finger protein 705B (300 aa).

The 72-residue stretch at 7 to 78 (VTFEDVAIDF…GRVFLQDQNP (72 aa)) folds into the KRAB domain. 3 C2H2-type zinc fingers span residues 172 to 194 (YQCN…KMTH), 200 to 222 (YACH…EKTH), and 228 to 250 (YKCH…ERTH). Residues 256–278 (YECDKSGKAFSQSSGFRGNKIIH) form a C2H2-type 4; degenerate zinc finger.

This sequence belongs to the krueppel C2H2-type zinc-finger protein family.

It localises to the nucleus. Its function is as follows. May be involved in transcriptional regulation. The chain is Zinc finger protein 705B (ZNF705B) from Homo sapiens (Human).